The chain runs to 651 residues: Probable replication restart protein PriA (651 aa).

8 residues coordinate Zn(2+): Cys-371, Cys-374, Cys-380, Cys-383, Cys-399, Cys-402, Cys-411, and Cys-414.

The protein belongs to the helicase family. PriA subfamily. As to quaternary structure, component of the replication restart primosome. Requires Zn(2+) as cofactor.

In terms of biological role, initiates the restart of stalled replication forks, which reloads the replicative helicase on sites other than the origin of replication. Recognizes and binds to abandoned replication forks and remodels them to uncover a helicase loading site. Promotes assembly of the primosome at these replication forks. The sequence is that of Probable replication restart protein PriA from Mycobacterium leprae (strain TN).